The primary structure comprises 161 residues: Respiratory growth induced protein 1 (161 aa).

Lys-68 is covalently cross-linked (Glycyl lysine isopeptide (Lys-Gly) (interchain with G-Cter in ubiquitin)).

This sequence belongs to the RGI1 family.

The protein localises to the cell membrane. Involved in the control of energetic metabolism and significantly contribute to cell fitness, especially under respiratory growth conditions. The polypeptide is Respiratory growth induced protein 1 (RGI1) (Saccharomyces cerevisiae (strain RM11-1a) (Baker's yeast)).